We begin with the raw amino-acid sequence, 361 residues long: Probable pectinesterase 50 (361 aa).

A signal peptide spans 1–22 (MGYISMSVVAFLVVFASPVVLA). Q174 serves as a coordination point for substrate. D197 (proton donor) is an active-site residue. Residue D218 is the Nucleophile of the active site. R275 and W277 together coordinate substrate.

The protein belongs to the pectinesterase family. Expressed in flower buds.

It localises to the secreted. The protein resides in the cell wall. The catalysed reaction is [(1-&gt;4)-alpha-D-galacturonosyl methyl ester](n) + n H2O = [(1-&gt;4)-alpha-D-galacturonosyl](n) + n methanol + n H(+). It functions in the pathway glycan metabolism; pectin degradation; 2-dehydro-3-deoxy-D-gluconate from pectin: step 1/5. Its function is as follows. Acts in the modification of cell walls via demethylesterification of cell wall pectin. The protein is Probable pectinesterase 50 (PME50) of Arabidopsis thaliana (Mouse-ear cress).